Reading from the N-terminus, the 190-residue chain is dCTP deaminase, dUMP-forming (190 aa).

Residues lysine 101–arginine 106, aspartate 119, threonine 127–glutamate 129, glutamine 148, tyrosine 162, and glutamine 174 each bind dCTP. The active-site Proton donor/acceptor is glutamate 129. The interval glycine 163–threonine 190 is disordered. Residues tyrosine 171–threonine 190 are compositionally biased toward polar residues.

This sequence belongs to the dCTP deaminase family. In terms of assembly, homotrimer.

It carries out the reaction dCTP + 2 H2O = dUMP + NH4(+) + diphosphate. It participates in pyrimidine metabolism; dUMP biosynthesis; dUMP from dCTP: step 1/1. Bifunctional enzyme that catalyzes both the deamination of dCTP to dUTP and the hydrolysis of dUTP to dUMP without releasing the toxic dUTP intermediate. The protein is dCTP deaminase, dUMP-forming of Mycobacterium avium (strain 104).